Consider the following 217-residue polypeptide: Flagellin B1 (217 aa).

Residues 1 to 12 constitute a propeptide that is removed on maturation; the sequence is MKVFEFLKGKRG.

It belongs to the archaeal flagellin family.

It is found in the archaeal flagellum. Functionally, flagellin is the subunit protein which polymerizes to form the filaments of archaeal flagella. This is Flagellin B1 (flaB1) from Methanocaldococcus jannaschii (strain ATCC 43067 / DSM 2661 / JAL-1 / JCM 10045 / NBRC 100440) (Methanococcus jannaschii).